The sequence spans 139 residues: ATP synthase epsilon chain (139 aa).

This sequence belongs to the ATPase epsilon chain family. In terms of assembly, F-type ATPases have 2 components, CF(1) - the catalytic core - and CF(0) - the membrane proton channel. CF(1) has five subunits: alpha(3), beta(3), gamma(1), delta(1), epsilon(1). CF(0) has three main subunits: a, b and c.

It localises to the cell inner membrane. Functionally, produces ATP from ADP in the presence of a proton gradient across the membrane. This is ATP synthase epsilon chain from Pectobacterium carotovorum subsp. carotovorum (strain PC1).